The sequence spans 603 residues: Elongation factor 4 (603 aa).

In terms of domain architecture, tr-type G spans 7 to 189; it reads SRIRNFSIIA…SIVHLVPPPQ (183 aa). GTP is bound by residues 19-24 and 136-139; these read DHGKST and NKID.

The protein belongs to the TRAFAC class translation factor GTPase superfamily. Classic translation factor GTPase family. LepA subfamily.

The protein resides in the cell inner membrane. It catalyses the reaction GTP + H2O = GDP + phosphate + H(+). Required for accurate and efficient protein synthesis under certain stress conditions. May act as a fidelity factor of the translation reaction, by catalyzing a one-codon backward translocation of tRNAs on improperly translocated ribosomes. Back-translocation proceeds from a post-translocation (POST) complex to a pre-translocation (PRE) complex, thus giving elongation factor G a second chance to translocate the tRNAs correctly. Binds to ribosomes in a GTP-dependent manner. In Cyanothece sp. (strain PCC 7425 / ATCC 29141), this protein is Elongation factor 4.